A 258-amino-acid polypeptide reads, in one-letter code: MAFPMPPHQTAYDRAATIFSPEGDLYQVRYAFEAVKKGWTSLGIKTNEGVVIAAEKRFIGPLVDIDDIDKIYKIDDHIGVAFAGMGGDGRILIDYARVFTVRHRLLYGEPPPVELVAKVVADVKQAYTQHGGVRPFGVALIFAGVNPDGTTKVYRTDPGGQYFSFKAIAIGSGEQVANEMFEKHYRSDMSLEEATKLALKILYAIIRKTVEDKEKAIATLPDQVELAYITVKERMFTKMTKEQVKEIVDSMREELLQL.

It belongs to the peptidase T1A family. As to quaternary structure, the 20S proteasome core is composed of 14 alpha and 14 beta subunits that assemble into four stacked heptameric rings, resulting in a barrel-shaped structure. The two inner rings, each composed of seven catalytic beta subunits, are sandwiched by two outer rings, each composed of seven alpha subunits. The catalytic chamber with the active sites is on the inside of the barrel. Has a gated structure, the ends of the cylinder being occluded by the N-termini of the alpha-subunits. Is capped at one or both ends by the proteasome regulatory ATPase, PAN.

The protein resides in the cytoplasm. With respect to regulation, the formation of the proteasomal ATPase PAN-20S proteasome complex, via the docking of the C-termini of PAN into the intersubunit pockets in the alpha-rings, triggers opening of the gate for substrate entry. Interconversion between the open-gate and close-gate conformations leads to a dynamic regulation of the 20S proteasome proteolysis activity. Its function is as follows. Component of the proteasome core, a large protease complex with broad specificity involved in protein degradation. This Aeropyrum pernix (strain ATCC 700893 / DSM 11879 / JCM 9820 / NBRC 100138 / K1) protein is Proteasome subunit alpha.